Here is a 160-residue protein sequence, read N- to C-terminus: Phosphopantetheine adenylyltransferase (160 aa).

A substrate-binding site is contributed by Ser11. Residues 11-12 (SF) and His19 each bind ATP. The substrate site is built by Lys43, Leu75, and Arg89. ATP is bound by residues 90 to 92 (GLR), Glu100, and 125 to 131 (YSFISSS).

It belongs to the bacterial CoaD family. Homohexamer. It depends on Mg(2+) as a cofactor.

The protein localises to the cytoplasm. It catalyses the reaction (R)-4'-phosphopantetheine + ATP + H(+) = 3'-dephospho-CoA + diphosphate. Its pathway is cofactor biosynthesis; coenzyme A biosynthesis; CoA from (R)-pantothenate: step 4/5. In terms of biological role, reversibly transfers an adenylyl group from ATP to 4'-phosphopantetheine, yielding dephospho-CoA (dPCoA) and pyrophosphate. The polypeptide is Phosphopantetheine adenylyltransferase (Staphylococcus aureus (strain Mu3 / ATCC 700698)).